Reading from the N-terminus, the 153-residue chain is MKEKISNNIQIKNKRATFDYELLDTFTAGIVLTGTEIKSIRLGKASLVDTFCIVEKGELWVKNMYIAEYFYGTYNNHNARRDRKLLLTKKELRKIEGAVRASGFTIVPTRLFINEKGLAKVVVAIARGKKEYDKRDSIRERDDRREMDRAFKR.

A disordered region spans residues 131–153 (EYDKRDSIRERDDRREMDRAFKR).

Belongs to the SmpB family.

The protein resides in the cytoplasm. In terms of biological role, required for rescue of stalled ribosomes mediated by trans-translation. Binds to transfer-messenger RNA (tmRNA), required for stable association of tmRNA with ribosomes. tmRNA and SmpB together mimic tRNA shape, replacing the anticodon stem-loop with SmpB. tmRNA is encoded by the ssrA gene; the 2 termini fold to resemble tRNA(Ala) and it encodes a 'tag peptide', a short internal open reading frame. During trans-translation Ala-aminoacylated tmRNA acts like a tRNA, entering the A-site of stalled ribosomes, displacing the stalled mRNA. The ribosome then switches to translate the ORF on the tmRNA; the nascent peptide is terminated with the 'tag peptide' encoded by the tmRNA and targeted for degradation. The ribosome is freed to recommence translation, which seems to be the essential function of trans-translation. This chain is SsrA-binding protein, found in Parabacteroides distasonis (strain ATCC 8503 / DSM 20701 / CIP 104284 / JCM 5825 / NCTC 11152).